The following is a 388-amino-acid chain: 3-dehydroquinate synthase (388 aa).

NAD(+) is bound by residues 85-90 (DGEQYK), 119-123 (GVIGD), 143-144 (TT), Lys-156, Lys-165, and 183-186 (TLKT). Residues Glu-198, His-261, and His-278 each coordinate Zn(2+).

This sequence belongs to the sugar phosphate cyclases superfamily. Dehydroquinate synthase family. Requires Co(2+) as cofactor. It depends on Zn(2+) as a cofactor. NAD(+) is required as a cofactor.

Its subcellular location is the cytoplasm. The enzyme catalyses 7-phospho-2-dehydro-3-deoxy-D-arabino-heptonate = 3-dehydroquinate + phosphate. It participates in metabolic intermediate biosynthesis; chorismate biosynthesis; chorismate from D-erythrose 4-phosphate and phosphoenolpyruvate: step 2/7. Functionally, catalyzes the conversion of 3-deoxy-D-arabino-heptulosonate 7-phosphate (DAHP) to dehydroquinate (DHQ). The sequence is that of 3-dehydroquinate synthase from Psychrobacter arcticus (strain DSM 17307 / VKM B-2377 / 273-4).